The sequence spans 343 residues: Phosphoribosylformylglycinamidine cyclo-ligase (343 aa).

This sequence belongs to the AIR synthase family.

The protein resides in the cytoplasm. The catalysed reaction is 2-formamido-N(1)-(5-O-phospho-beta-D-ribosyl)acetamidine + ATP = 5-amino-1-(5-phospho-beta-D-ribosyl)imidazole + ADP + phosphate + H(+). It functions in the pathway purine metabolism; IMP biosynthesis via de novo pathway; 5-amino-1-(5-phospho-D-ribosyl)imidazole from N(2)-formyl-N(1)-(5-phospho-D-ribosyl)glycinamide: step 2/2. This is Phosphoribosylformylglycinamidine cyclo-ligase from Parasynechococcus marenigrum (strain WH8102).